The primary structure comprises 443 residues: Inactive polypeptide N-acetylgalactosaminyltransferase-like protein 5 (443 aa).

At 1–4 (MRNA) the chain is on the cytoplasmic side. The chain crosses the membrane as a helical; Signal-anchor for type II membrane protein span at residues 5–27 (IIRCLFYGSLTFGIWTALLFIYL). Over 28-443 (HHNHVSNWQK…PELEASVNRS (416 aa)) the chain is Lumenal. A glycan (N-linked (GlcNAc...) asparagine) is linked at Asn87. 2 disulfides stabilise this stretch: Cys124-Cys355 and Cys346-Cys422. The tract at residues 133-243 (LPTASIVICF…RVWLEPLLHA (111 aa)) is catalytic subdomain A. Substrate contacts are provided by Asp174 and Arg204. Asp227 is a Mn(2+) binding site. Ser228 serves as a coordination point for substrate. Position 229 (His229) interacts with Mn(2+). Residues 301 to 363 (PIRSPAMSGG…PCSRVGHISK (63 aa)) are catalytic subdomain B. Trp332 is a substrate binding site. His360 lines the Mn(2+) pocket.

The protein belongs to the glycosyltransferase 2 family. GalNAc-T subfamily. It depends on Mn(2+) as a cofactor. In terms of tissue distribution, expressed in testis.

The protein localises to the late endosome membrane. In terms of biological role, probable inactive glycosyltransferase required during spermatid development. May participate in protein loading into the acrosomes and accumulation of ubiquitin-proteasome systems around the head-tail coupling apparatus region. In Macaca fascicularis (Crab-eating macaque), this protein is Inactive polypeptide N-acetylgalactosaminyltransferase-like protein 5 (GALNTL5).